The sequence spans 236 residues: Small ribosomal subunit protein uS2c (236 aa).

Belongs to the universal ribosomal protein uS2 family.

It is found in the plastid. The protein resides in the chloroplast. This is Small ribosomal subunit protein uS2c (rps2) from Aethionema grandiflorum (Persian stone-cress).